A 361-amino-acid chain; its full sequence is 3-dehydroquinate synthase (361 aa).

Residues 72 to 77 (SGEKEK), 130 to 131 (TT), Lys142, and Lys151 contribute to the NAD(+) site. Glu184, His247, and His264 together coordinate Zn(2+).

It belongs to the sugar phosphate cyclases superfamily. Dehydroquinate synthase family. It depends on Co(2+) as a cofactor. Requires Zn(2+) as cofactor. The cofactor is NAD(+).

The protein resides in the cytoplasm. The catalysed reaction is 7-phospho-2-dehydro-3-deoxy-D-arabino-heptonate = 3-dehydroquinate + phosphate. The protein operates within metabolic intermediate biosynthesis; chorismate biosynthesis; chorismate from D-erythrose 4-phosphate and phosphoenolpyruvate: step 2/7. Its function is as follows. Catalyzes the conversion of 3-deoxy-D-arabino-heptulosonate 7-phosphate (DAHP) to dehydroquinate (DHQ). The sequence is that of 3-dehydroquinate synthase from Bacillus cereus (strain B4264).